The primary structure comprises 265 residues: Adenosine 5'-phosphosulfate reductase (265 aa).

The [4Fe-4S] cluster site is built by cysteine 135, cysteine 136, cysteine 218, and cysteine 221. Cysteine 246 (nucleophile; cysteine thiosulfonate intermediate) is an active-site residue.

Belongs to the PAPS reductase family. CysH subfamily. The cofactor is [4Fe-4S] cluster.

It is found in the cytoplasm. It carries out the reaction [thioredoxin]-disulfide + sulfite + AMP + 2 H(+) = adenosine 5'-phosphosulfate + [thioredoxin]-dithiol. It functions in the pathway sulfur metabolism; hydrogen sulfide biosynthesis; sulfite from sulfate. In terms of biological role, catalyzes the formation of sulfite from adenosine 5'-phosphosulfate (APS) using thioredoxin as an electron donor. The polypeptide is Adenosine 5'-phosphosulfate reductase (Rhizobium meliloti (strain 1021) (Ensifer meliloti)).